The following is a 498-amino-acid chain: MLLLELKKTNQTLGTIHFIGIGGVGMSGIAEILHNLGYKVQGSDLVENYNTKRLESYGIKIFLGHAKQNIKNVSYVVISSAIHQNNPEIKEALERKIPIIRRAEMLAELMRLKCSVAVSGSHGKTTTTSLIACLFEAAGLYPTVINGGIINNKSTNAYLGSSNYLIAEADESDATFIHIPSTIAIITNIDPEHLDYYQDFEILIGAFRSFITNLPFYGFAVCCIDHKIVRKLVDDITERKIITYGIDAEDAHIIAFNINTDIASSTFDVKISLPNVLGTTIIEKITIPTPGRHNILNSLAAIAVGIELDFGIKAIKNGFNNFKGVKRRFTKVAEYNQAVIIDDYAHHPEEIKATLATAKNIANQQNGKVIAIFQPHRYSRIKYLFDDFMLCFADADILYITNIYAAGEKPIEGITGQSLVDKMTQNKYHDKANFLAELDDVVSVIIDHAASGDMIIMMGAGNISSFANELDRRLLSQEILASSQNTDFDTSSYDKVIR.

ATP is bound at residue 120–126; the sequence is GSHGKTT.

It belongs to the MurCDEF family.

It is found in the cytoplasm. It catalyses the reaction UDP-N-acetyl-alpha-D-muramate + L-alanine + ATP = UDP-N-acetyl-alpha-D-muramoyl-L-alanine + ADP + phosphate + H(+). It functions in the pathway cell wall biogenesis; peptidoglycan biosynthesis. Functionally, cell wall formation. The polypeptide is UDP-N-acetylmuramate--L-alanine ligase (Rickettsia typhi (strain ATCC VR-144 / Wilmington)).